We begin with the raw amino-acid sequence, 213 residues long: Protein RCR1 (213 aa).

Over 1–39 (MGLISYENEAINEVKKADNHHVSKFVTSYYGPSSSSWQS) the chain is Lumenal. A helical membrane pass occupies residues 40–62 (GIWILFVLFVAAVILIILFTFVA). Residues 63–213 (NRRRRRMGRA…PERAKVNARS (151 aa)) lie on the Cytoplasmic side of the membrane. The PY motif signature appears at 104-107 (VPEY). Positions 190–213 (ERLPGGTTTQEINPPERAKVNARS) are disordered. The span at 203 to 213 (PPERAKVNARS) shows a compositional bias: basic and acidic residues.

As to quaternary structure, interacts with PMT4 and WW domain of RSP5.

It is found in the endoplasmic reticulum membrane. Its function is as follows. Regulates chitin deposition in the cell wall. The chain is Protein RCR1 (RCR1) from Saccharomyces cerevisiae (strain ATCC 204508 / S288c) (Baker's yeast).